We begin with the raw amino-acid sequence, 342 residues long: MAGRLQVEVRLQDGVIRAVDTRLQRPLAQLSRLLVGQTAEAALARLPLLFSLCAAAQQVAALRALERAAGWTAEPEVERGRSQLTELELIRESLLRLVQVWELPLPLERLKVLVALCRRGAARLQPLTSFRAPSLPADPHLQETLAELAAAWADLELPITADWLGPRLGRWQEVVLGGPPPAVFDPADLSALLAQLRSGDTRASIAGQPRITGPLCAAEAQLSAAAQIEQHVGALLRHTAQAIDSLQQPSPPPAVAGLLAGEGVGLAQTARGALLHRVCLDEGTVGAWQLLAPTDWNFHEDGPLRRRLCGVRVAEEDAGALLRELILAVDPCVAFEVKIIHA.

This sequence belongs to the HupK family.

The protein is Hydrogenase expression/formation protein HupV (hupV) of Azotobacter chroococcum mcd 1.